The sequence spans 307 residues: UDP-3-O-acyl-N-acetylglucosamine deacetylase (307 aa).

Residues histidine 78, histidine 241, and aspartate 245 each contribute to the Zn(2+) site. Residue histidine 268 is the Proton donor of the active site.

It belongs to the LpxC family. Requires Zn(2+) as cofactor.

It carries out the reaction a UDP-3-O-[(3R)-3-hydroxyacyl]-N-acetyl-alpha-D-glucosamine + H2O = a UDP-3-O-[(3R)-3-hydroxyacyl]-alpha-D-glucosamine + acetate. Its pathway is glycolipid biosynthesis; lipid IV(A) biosynthesis; lipid IV(A) from (3R)-3-hydroxytetradecanoyl-[acyl-carrier-protein] and UDP-N-acetyl-alpha-D-glucosamine: step 2/6. Functionally, catalyzes the hydrolysis of UDP-3-O-myristoyl-N-acetylglucosamine to form UDP-3-O-myristoylglucosamine and acetate, the committed step in lipid A biosynthesis. The sequence is that of UDP-3-O-acyl-N-acetylglucosamine deacetylase from Delftia acidovorans (strain DSM 14801 / SPH-1).